A 276-amino-acid polypeptide reads, in one-letter code: Ubiquinone biosynthesis protein coq11, mitochondrial (276 aa).

This sequence belongs to the NAD(P)-dependent epimerase/dehydratase family.

It is found in the mitochondrion. In terms of biological role, acts in the coenzyme Q biosynthetic pathway. The chain is Ubiquinone biosynthesis protein coq11, mitochondrial from Schizosaccharomyces pombe (strain 972 / ATCC 24843) (Fission yeast).